Reading from the N-terminus, the 273-residue chain is tRNA (guanine-N(7)-)-methyltransferase (273 aa).

Polar residues predominate over residues 1–31 (MSQHPDINTNVDATSLTDDQKSLDTNATSGN). Residues 1-36 (MSQHPDINTNVDATSLTDDQKSLDTNATSGNEVAPD) are disordered. Glu-105, Glu-130, Asp-157, and Asp-179 together coordinate S-adenosyl-L-methionine. The active site involves Asp-179. Residues Lys-183, Asp-215, and 252 to 255 (TKFE) each bind substrate.

Belongs to the class I-like SAM-binding methyltransferase superfamily. TrmB family.

It catalyses the reaction guanosine(46) in tRNA + S-adenosyl-L-methionine = N(7)-methylguanosine(46) in tRNA + S-adenosyl-L-homocysteine. The protein operates within tRNA modification; N(7)-methylguanine-tRNA biosynthesis. Its function is as follows. Catalyzes the formation of N(7)-methylguanine at position 46 (m7G46) in tRNA. The sequence is that of tRNA (guanine-N(7)-)-methyltransferase from Psychrobacter cryohalolentis (strain ATCC BAA-1226 / DSM 17306 / VKM B-2378 / K5).